The following is a 238-amino-acid chain: Orotidine 5'-phosphate decarboxylase (238 aa).

Substrate contacts are provided by residues Asp10, Lys32, 59–68, Thr122, Arg184, Gln193, Gly213, and Arg214; that span reads DLKLHDIPNT. The active-site Proton donor is the Lys61.

The protein belongs to the OMP decarboxylase family. Type 1 subfamily. In terms of assembly, homodimer.

It carries out the reaction orotidine 5'-phosphate + H(+) = UMP + CO2. It participates in pyrimidine metabolism; UMP biosynthesis via de novo pathway; UMP from orotate: step 2/2. Its function is as follows. Catalyzes the decarboxylation of orotidine 5'-monophosphate (OMP) to uridine 5'-monophosphate (UMP). The protein is Orotidine 5'-phosphate decarboxylase of Bacillus cereus (strain Q1).